The primary structure comprises 78 residues: Short neurotoxin OH-46 (78 aa).

Residues 1-21 (MKNLLLTFLVVTIVCLDLGYT) form the signal peptide. 4 cysteine pairs are disulfide-bonded: cysteine 24/cysteine 40, cysteine 33/cysteine 58, cysteine 62/cysteine 70, and cysteine 71/cysteine 76.

It belongs to the three-finger toxin family. Short-chain subfamily. Expressed by the venom gland.

Its subcellular location is the secreted. This three-finger toxin binds and inhibits the nicotinic acetylcholine receptor (nAChR). This is Short neurotoxin OH-46 from Ophiophagus hannah (King cobra).